The following is a 46-amino-acid chain: Protein PsbN (46 aa).

A helical transmembrane segment spans residues 7–27 (ALSVALGVMAVVLGLTGFGVY).

This sequence belongs to the PsbN family.

It localises to the cellular thylakoid membrane. Its function is as follows. May play a role in photosystem I and II biogenesis. The sequence is that of Protein PsbN from Synechococcus sp. (strain CC9902).